The primary structure comprises 518 residues: MIIYREENEIIKKALENLNIPDRVYIFDTTLRDGEQTPGVSLTPEEKIDIAIKLDDLGVDVIEAGFPVSSLGEQEAIKKICSLNLDAEICGLARAVKKDIDVAIDCGVDRIHTFIATSPLHRKYKLKKSKEEIIDIAVDAIEYIKEHGIRVEFSAEDATRTEIDYLIEVYKKAVDAGADIINVPDTVGVMIPRAMYYLINELKKEIKVPISVHCHNDFGLAVANSLAAVEAGAEQVHCTINGLGERGGNAALEEVVMSLMSIYGVKTNIKTQKLYEISQLVSKYTEIKVQPNKAIVGENAFAHESGIHAHGVLAHALTYEPIPPELVGQKRKIILGKHTGTHAIEAKLKELGIEVGKDINKDQFDEIVKRIKALGDKGKRVTDRDVEAIVEDVVGKLAKKDRVVELEQIAVMTGNRVIPTASVALKIEEEIKKSSAIGVGPVDAAVKAIQKAIGEKIKLKEYHINAITGGTDALAEVIVTLEGYGREITTKAASEDIVRASVEAVIDGINKILAKREK.

In terms of domain architecture, Pyruvate carboxyltransferase spans 24–275 (VYIFDTTLRD…KTNIKTQKLY (252 aa)). Residues Asp33, His213, His215, and Asn249 each coordinate a divalent metal cation.

Belongs to the alpha-IPM synthase/homocitrate synthase family. Homodimer. A divalent metal cation serves as cofactor.

It catalyses the reaction 3-methyl-2-oxobutanoate + acetyl-CoA + H2O = (2S)-2-isopropylmalate + CoA + H(+). The protein operates within amino-acid biosynthesis; L-leucine biosynthesis; L-leucine from 3-methyl-2-oxobutanoate: step 1/4. Catalyzes the condensation of the acetyl group of acetyl-CoA with 3-methyl-2-oxobutanoate (2-oxoisovalerate) to form 3-carboxy-3-hydroxy-4-methylpentanoate (2-isopropylmalate). In Methanocaldococcus jannaschii (strain ATCC 43067 / DSM 2661 / JAL-1 / JCM 10045 / NBRC 100440) (Methanococcus jannaschii), this protein is 2-isopropylmalate synthase (leuA).